The chain runs to 157 residues: Glycine-rich RNA-binding, abscisic acid-inducible protein (157 aa).

One can recognise an RRM domain in the interval 8 to 86 (YRCFVGGLAW…RNITVNQAQS (79 aa)). A disordered region spans residues 82-157 (NQAQSRGGGG…YGGGGGGWRD (76 aa)). Over residues 87–157 (RGGGGGGGGY…YGGGGGGWRD (71 aa)) the composition is skewed to gly residues.

In terms of biological role, possibly has a role in RNA transcription or processing during stress. This Zea mays (Maize) protein is Glycine-rich RNA-binding, abscisic acid-inducible protein (RAB15).